The chain runs to 203 residues: IMP cyclohydrolase (203 aa).

Belongs to the archaeal IMP cyclohydrolase family.

The enzyme catalyses IMP + H2O = 5-formamido-1-(5-phospho-D-ribosyl)imidazole-4-carboxamide. Its pathway is purine metabolism; IMP biosynthesis via de novo pathway; IMP from 5-formamido-1-(5-phospho-D-ribosyl)imidazole-4-carboxamide: step 1/1. Its function is as follows. Catalyzes the cyclization of 5-formylamidoimidazole-4-carboxamide ribonucleotide to IMP. The chain is IMP cyclohydrolase from Methanococcus aeolicus (strain ATCC BAA-1280 / DSM 17508 / OCM 812 / Nankai-3).